A 306-amino-acid chain; its full sequence is tRNA dimethylallyltransferase (306 aa).

Residue 9–16 participates in ATP binding; sequence GPTAIGKT. 11-16 contacts substrate; the sequence is TAIGKT. The interval 34–37 is interaction with substrate tRNA; the sequence is DSMQ.

It belongs to the IPP transferase family. In terms of assembly, monomer. The cofactor is Mg(2+).

The enzyme catalyses adenosine(37) in tRNA + dimethylallyl diphosphate = N(6)-dimethylallyladenosine(37) in tRNA + diphosphate. Catalyzes the transfer of a dimethylallyl group onto the adenine at position 37 in tRNAs that read codons beginning with uridine, leading to the formation of N6-(dimethylallyl)adenosine (i(6)A). The chain is tRNA dimethylallyltransferase from Lactobacillus acidophilus (strain ATCC 700396 / NCK56 / N2 / NCFM).